A 102-amino-acid polypeptide reads, in one-letter code: Putative ribosomal protein uL13-like (102 aa).

The protein belongs to the universal ribosomal protein uL13 family.

This is Putative ribosomal protein uL13-like (RPL13AP3) from Homo sapiens (Human).